A 1528-amino-acid chain; its full sequence is Multidrug resistance-associated protein 1 (1528 aa).

Residues 1–33 (MALRSFCSADGSDPLWDWNVTWHTSNPDFTKCF) are Extracellular-facing. Asn19 carries an N-linked (GlcNAc...) asparagine glycan. Residues 34-54 (QNTVLTWVPCFYLWSCFPLYF) form a helical membrane-spanning segment. Topologically, residues 55–74 (FYLSRHDRGYIQMTHLNKTK) are cytoplasmic. Residues 75 to 95 (TALGFFLWIICWADLFYSFWE) form a helical membrane-spanning segment. Residues 96–100 (RSQGV) are Extracellular-facing. Residues 101-121 (LRAPVLLVSPTLLGITMLLAT) traverse the membrane as a helical segment. Over 122–133 (FLIQLERRKGVQ) the chain is Cytoplasmic. Residues 134-154 (SSGIMLTFWLVALLCALAILR) traverse the membrane as a helical segment. Residues 155 to 172 (SKIISALKKDAHVDVFRD) are Extracellular-facing. A helical transmembrane segment spans residues 173–193 (STFYLYFTLVLVQLVLSCFSD). Residues 194–317 (CSPLFSETVH…KDREPSLFKV (124 aa)) lie on the Cytoplasmic side of the membrane. The residue at position 277 (Tyr277) is a Phosphotyrosine. Ser290 bears the Phosphoserine mark. Residues 318-338 (LYKTFGPYFLMSFLYKALHDL) form a helical membrane-spanning segment. In terms of domain architecture, ABC transmembrane type-1 1 spans 326 to 609 (FLMSFLYKAL…LPMVISSIVQ (284 aa)). At 339–364 (MMFAGPKILELIINFVNDREAPDWQG) the chain is on the extracellular side. A helical membrane pass occupies residues 365–385 (YFYTALLFVSACLQTLALHQY). The Cytoplasmic segment spans residues 386–441 (FHICFVSGMRIKTAVVGAVYRKALLITNAARKSSTVGEIVNLMSVDAQRFMDLATY). Residues 442–462 (INMIWSAPLQVILALYFLWLS) traverse the membrane as a helical segment. Residues 463–465 (LGP) are Extracellular-facing. A helical membrane pass occupies residues 466-486 (SVLAGVAVMILMVPLNAVMAM). Over 487 to 548 (KTKTYQVAHM…VLKKSAYLAA (62 aa)) the chain is Cytoplasmic. N6-succinyllysine is present on Lys504. A helical transmembrane segment spans residues 549–569 (VGTFTWVCTPFLVALSTFAVF). Over 570 to 591 (VTVDERNILDAKKAFVSLALFN) the chain is Extracellular. A helical membrane pass occupies residues 592 to 612 (ILRFPLNILPMVISSIVQASV). The Cytoplasmic segment spans residues 613–963 (SLKRLRIFLS…VQLSVYWNYM (351 aa)). The region spanning 644 to 868 (ITVKNATFTW…DGAFAEFLRT (225 aa)) is the ABC transporter 1 domain. Residue 678–685 (GQVGCGKS) coordinates ATP. Disordered regions lie at residues 876 to 895 (LASEDDSVSGSGKESKPVEN) and 909 to 929 (RHLSNSSSHSGDTSQQHSSIA). A phosphoserine mark is found at Ser878, Ser882, Ser912, and Ser927. Residues 910-929 (HLSNSSSHSGDTSQQHSSIA) are compositionally biased toward polar residues. A helical transmembrane segment spans residues 964 to 984 (KAIGLFITFLSIFLFLCNHVS). In terms of domain architecture, ABC transmembrane type-1 2 spans 971 to 1253 (TFLSIFLFLC…LVRMSSEMET (283 aa)). The Extracellular portion of the chain corresponds to 985-1022 (ALASNYWLSLWTDDPPVVNGTQANRNFRLSVYGALGIL). A glycan (N-linked (GlcNAc...) asparagine) is linked at Asn1003. The helical transmembrane segment at 1023–1043 (QGAAIFGYSMAVSIGGIFASR) threads the bilayer. Residues 1044 to 1086 (RLHLDLLYNVLRSPMSFFERTPSGNLVNRFSKELDTVDSMIPQ) are Cytoplasmic-facing. Residues 1087 to 1107 (VIKMFMGSLFSVIGAVIIILL) traverse the membrane as a helical segment. A topological domain (extracellular) is located at residue Ala1108. The helical transmembrane segment at 1109–1129 (TPIAAVIIPPLGLVYFFVQRF) threads the bilayer. Topologically, residues 1130 to 1200 (YVASSRQLKR…VANRWLAVRL (71 aa)) are cytoplasmic. The chain crosses the membrane as a helical span at residues 1201 to 1221 (ECVGNCIVLFAALFAVISRHS). The Extracellular segment spans residues 1222–1223 (LS). Residues 1224–1244 (AGLVGLSVSYSLQITAYLNWL) form a helical membrane-spanning segment. The Cytoplasmic segment spans residues 1245 to 1528 (VRMSSEMETN…YSMAKDAGLV (284 aa)). The 235-residue stretch at 1290–1524 (VEFRDYCLRY…RGIFYSMAKD (235 aa)) folds into the ABC transporter 2 domain. 1324–1331 (GRTGAGKS) provides a ligand contact to ATP.

The protein belongs to the ABC transporter superfamily. ABCC family. Conjugate transporter (TC 3.A.1.208) subfamily.

Its subcellular location is the cell membrane. The protein localises to the basolateral cell membrane. The enzyme catalyses ATP + H2O + xenobioticSide 1 = ADP + phosphate + xenobioticSide 2.. It carries out the reaction an S-substituted glutathione(in) + ATP + H2O = an S-substituted glutathione(out) + ADP + phosphate + H(+). The catalysed reaction is leukotriene C4(in) + ATP + H2O = leukotriene C4(out) + ADP + phosphate + H(+). It catalyses the reaction sphing-4-enine 1-phosphate(in) + ATP + H2O = sphing-4-enine 1-phosphate(out) + ADP + phosphate + H(+). The enzyme catalyses 17beta-estradiol 17-O-(beta-D-glucuronate)(in) + ATP + H2O = 17beta-estradiol 17-O-(beta-D-glucuronate)(out) + ADP + phosphate + H(+). It carries out the reaction vincristine(in) + ATP + H2O = vincristine(out) + ADP + phosphate + H(+). The catalysed reaction is daunorubicin(in) + ATP + H2O = daunorubicin(out) + ADP + phosphate + H(+). It catalyses the reaction 2',3'-cGAMP(in) + ATP + H2O = 2',3'-cGAMP(out) + ADP + phosphate + H(+). The enzyme catalyses S-[(2E,6E,10E)-geranylgeranyl]-L-glutathione(in) + ATP + H2O = S-[(2E,6E,10E)-geranylgeranyl]-L-glutathione(out) + ADP + phosphate + H(+). It carries out the reaction prostaglandin A2-S-(R)-glutathione(in) + ATP + H2O = prostaglandin A2-S-(R)-glutathione(out) + ADP + phosphate + H(+). The catalysed reaction is prostaglandin A2-S-(S)-glutathione(in) + ATP + H2O = prostaglandin A2-S-(S)-glutathione(out) + ADP + phosphate + H(+). MK 571 inhibits sphingosine 1-phosphate and leukotriene C4 export. In terms of biological role, mediates export of organic anions and drugs from the cytoplasm. Mediates ATP-dependent transport of glutathione and glutathione conjugates, leukotriene C4, estradiol-17-beta-o-glucuronide, methotrexate, antiviral drugs and other xenobiotics. Confers resistance to anticancer drugs by decreasing accumulation of drugs in cells, and by mediating ATP- and GSH-dependent drug export. Hydrolyzes ATP with low efficiency. Catalyzes the export of sphingosine 1-phosphate from mast cells independently of their degranulation. Participates in inflammatory response by allowing export of leukotriene C4 from leukotriene C4-synthesizing cells. Mediates ATP-dependent, GSH-independent cyclic GMP-AMP (cGAMP) export. Thus, by limiting intracellular cGAMP concentrations negatively regulates the cGAS-STING pathway. Exports S-geranylgeranyl-glutathione (GGG) in lymphoid cells and stromal compartments of lymphoid organs. ABCC1 (via extracellular transport) with GGT5 (via GGG catabolism) establish GGG gradients within lymphoid tissues to position P2RY8-positive lymphocytes at germinal centers in lymphoid follicles and restrict their chemotactic transmigration from blood vessels to the bone marrow parenchyma. Mediates basolateral export of GSH-conjugated R- and S-prostaglandin A2 diastereomers in polarized epithelial cells. In Mus musculus (Mouse), this protein is Multidrug resistance-associated protein 1.